The sequence spans 376 residues: MEYEHLWLTAYGCLAVVGAVVVYCAIKQSLVTNWWFYGSIYPQVKLMADRTTFKPFEYPGCYDKWDTHEHAHWSFKELNMQDDVHDWHNRLSEAEKTFLVQILRFFTQGDVDVAVGYVQYLQLFQQPEVRMMLFSFGAREAMHIASYSHLISTLNLPDVTYQEFLKYKAMKDKHEFVFNSRFKSTTVGRFFNYLLFGYDTHLEEIAVKIALFSAFIEGVQLFSSFIMLLNFTRHGLMKKMGQIIQWSIADETHHTNSMMELFSTLVVENKSHIRLGVLEARVRDTARKIVQLEDGFIDLAFSMGEMRQLTADDVKSYIRYITNRRLQTMGYLPLYSVVENPLPWVEDLLNAPSHTNFFENKPTEYAKASLTGDWPW.

Fe cation-binding residues include Asp-110, Glu-140, and His-143. Residue Tyr-147 is part of the active site. The Fe cation site is built by Glu-217, Glu-251, and His-254.

It belongs to the ribonucleoside diphosphate reductase small chain family. In terms of assembly, heterotetramer composed of a homodimer of the large subunit (R1) and a homodimer of the small subunit (R2). Larger multisubunit protein complex are also active, composed of (R1)n(R2)n. It depends on Fe cation as a cofactor.

The enzyme catalyses a 2'-deoxyribonucleoside 5'-diphosphate + [thioredoxin]-disulfide + H2O = a ribonucleoside 5'-diphosphate + [thioredoxin]-dithiol. In terms of biological role, ribonucleoside-diphosphate reductase holoenzyme provides the precursors necessary for viral DNA synthesis. Allows virus growth in non-dividing cells. Catalyzes the biosynthesis of deoxyribonucleotides from the corresponding ribonucleotides. This is Probable ribonucleoside-diphosphate reductase small subunit 048L from Invertebrate iridescent virus 3 (IIV-3).